The primary structure comprises 366 residues: tRNA(Met) cytidine acetate ligase (366 aa).

Residues 7 to 20, Gly-96, Asn-152, and Arg-175 contribute to the ATP site; that span reads IAEF…HQYL.

Belongs to the TmcAL family.

The protein localises to the cytoplasm. It catalyses the reaction cytidine(34) in elongator tRNA(Met) + acetate + ATP = N(4)-acetylcytidine(34) in elongator tRNA(Met) + AMP + diphosphate. Its function is as follows. Catalyzes the formation of N(4)-acetylcytidine (ac(4)C) at the wobble position of elongator tRNA(Met), using acetate and ATP as substrates. First activates an acetate ion to form acetyladenylate (Ac-AMP) and then transfers the acetyl group to tRNA to form ac(4)C34. The chain is tRNA(Met) cytidine acetate ligase from Streptococcus equi subsp. zooepidemicus (strain H70).